A 312-amino-acid chain; its full sequence is tRNA dimethylallyltransferase (312 aa).

15-22 (GPTAAGKS) is a binding site for ATP. 17–22 (TAAGKS) is a substrate binding site. An interaction with substrate tRNA region spans residues 40–43 (DSMQ).

This sequence belongs to the IPP transferase family. As to quaternary structure, monomer. Mg(2+) serves as cofactor.

It catalyses the reaction adenosine(37) in tRNA + dimethylallyl diphosphate = N(6)-dimethylallyladenosine(37) in tRNA + diphosphate. In terms of biological role, catalyzes the transfer of a dimethylallyl group onto the adenine at position 37 in tRNAs that read codons beginning with uridine, leading to the formation of N6-(dimethylallyl)adenosine (i(6)A). The sequence is that of tRNA dimethylallyltransferase from Streptomyces griseus subsp. griseus (strain JCM 4626 / CBS 651.72 / NBRC 13350 / KCC S-0626 / ISP 5235).